The following is a 458-amino-acid chain: Argininosuccinate lyase (458 aa).

Belongs to the lyase 1 family. Argininosuccinate lyase subfamily.

The protein resides in the cytoplasm. It catalyses the reaction 2-(N(omega)-L-arginino)succinate = fumarate + L-arginine. It participates in amino-acid biosynthesis; L-arginine biosynthesis; L-arginine from L-ornithine and carbamoyl phosphate: step 3/3. The polypeptide is Argininosuccinate lyase (Salmonella heidelberg (strain SL476)).